Reading from the N-terminus, the 475-residue chain is Aspartyl/glutamyl-tRNA(Asn/Gln) amidotransferase subunit B (475 aa).

The protein belongs to the GatB/GatE family. GatB subfamily. Heterotrimer of A, B and C subunits.

The enzyme catalyses L-glutamyl-tRNA(Gln) + L-glutamine + ATP + H2O = L-glutaminyl-tRNA(Gln) + L-glutamate + ADP + phosphate + H(+). The catalysed reaction is L-aspartyl-tRNA(Asn) + L-glutamine + ATP + H2O = L-asparaginyl-tRNA(Asn) + L-glutamate + ADP + phosphate + 2 H(+). Its function is as follows. Allows the formation of correctly charged Asn-tRNA(Asn) or Gln-tRNA(Gln) through the transamidation of misacylated Asp-tRNA(Asn) or Glu-tRNA(Gln) in organisms which lack either or both of asparaginyl-tRNA or glutaminyl-tRNA synthetases. The reaction takes place in the presence of glutamine and ATP through an activated phospho-Asp-tRNA(Asn) or phospho-Glu-tRNA(Gln). The sequence is that of Aspartyl/glutamyl-tRNA(Asn/Gln) amidotransferase subunit B from Bacillus cereus (strain B4264).